Reading from the N-terminus, the 384-residue chain is Putative F-box/kelch-repeat protein At3g27910 (384 aa).

The F-box domain maps to 27 to 79; the sequence is SPTSLPLPDEIIVNCFAYIPRCDYPSLSLVSKTFNRLITSIELNIVRSLFQRT. 4 Kelch repeats span residues 138 to 184, 185 to 235, 237 to 274, and 275 to 323; these read KIYV…IVDG, KIYV…VMNK, IYIM…VIDN, and MLYT…MANH.

In Arabidopsis thaliana (Mouse-ear cress), this protein is Putative F-box/kelch-repeat protein At3g27910.